Here is a 548-residue protein sequence, read N- to C-terminus: MFS-rype transporter paaT (548 aa).

The span at 1–10 (MEAPRSDQAH) shows a compositional bias: basic and acidic residues. The disordered stretch occupies residues 1–32 (MEAPRSDQAHTDATTPMEAIRTTSLGTNNYGP). A compositionally biased stretch (polar residues) spans 21-30 (RTTSLGTNNY). N-linked (GlcNAc...) asparagine glycosylation is found at Asn-70 and Asn-93. 12 consecutive transmembrane segments (helical) span residues 100–120 (WYCT…SSVI), 139–159 (LVVI…FAPM), 174–194 (ALAV…TLIV), 197–217 (LIDG…LADL), 224–244 (GVPM…GPLV), 256–276 (WLYW…TFTV), 332–352 (IVLF…MFFV), 370–390 (GLMF…APFV), 411–431 (LIPM…FAWT), 436–456 (LHWM…ILLY), 471–493 (AASA…VLFT), and 505–525 (ASTL…VFYF). The short motif at 258–269 (YWIQLILAFVAW) is the Peroxisomal targeting signal element.

It belongs to the major facilitator superfamily. DHA1 family. Polyamines/proton antiporter (TC 2.A.1.2.16) subfamily.

It localises to the peroxisome membrane. MFS-type transporter involved in penicillin production, most likely through the translocation of side-chain precursors (phenylacetic acid and phenoxyacetic acid) from the cytosol to the peroxisomal lumen across the peroxisomal membrane. This Penicillium rubens (strain ATCC 28089 / DSM 1075 / NRRL 1951 / Wisconsin 54-1255) (Penicillium chrysogenum) protein is MFS-rype transporter paaT.